A 461-amino-acid chain; its full sequence is RNA-binding protein ZCH321 (461 aa).

C3H1-type zinc fingers lie at residues 63–85 and 181–208; these read LCQL…HAAL and ACDF…HICK. The segment at 224–243 is disordered; sequence TSQARDGGEPGPRGAKKGSV. An MKT1-binding motif motif is present at residues 446–451; sequence WQHNPY.

Its function is as follows. RNA-binding protein involved in regulation of mRNA stability. Promotes mRNA stabilization by recruiting MKT1 and PBP1. Stabilizes transcripts encoding mitochondrial proteins. This chain is RNA-binding protein ZCH321, found in Trypanosoma brucei brucei (strain 927/4 GUTat10.1).